The chain runs to 557 residues: Inositol-3-phosphate synthase 1 (557 aa).

NAD(+) contacts are provided by Gly67, Gly68, Asn69, Asn70, Asp141, Ser177, Val178, Gln188, Arg191, Thr228, Ala229, Asn230, Thr231, Gly278, Ser279, Asp303, Ser306, Asn337, Asn338, Asp339, and Lys352. Phosphoserine is present on Ser279. Residue Ser357 is modified to Phosphoserine. Residues Gly390, Asp391, Asp419, and Ser420 each coordinate NAD(+). A disordered region spans residues 514-557; that stretch reads GIKPEEVKATSPLPCKKESTPATNGCTGDANGHTQAPTPELSTA. Residue Ser524 is modified to Phosphoserine. Residues 533-557 show a composition bias toward polar residues; sequence TPATNGCTGDANGHTQAPTPELSTA.

This sequence belongs to the myo-inositol 1-phosphate synthase family. In terms of assembly, homotrimer. It depends on NAD(+) as a cofactor. Phosphorylation at Ser-524 does not appear to affect enzyme activity, and is detected in brain and testis. As to expression, expressed in testis, brain and epididymis (at protein level). Moderately expressed in brain, lung, liver, and kidney. Low expression in heart and spleen. Very low expression in skeletal muscle. In terms of tissue distribution, expressed in testis, spleen, heart, brainstem, hippocampus, cerebellum, cortex and amygdala. Absent or very lowly expressed in intestine, lung and muscle. Expressed in intestine, lung, liver, muscle, testis, spleen, brainstem, hippocampus, cerebellum, cortex and amygdala. Absent or lowly expressed in heart and kidney. As to expression, expressed in intestine (at protein level).

Its subcellular location is the cytoplasm. It carries out the reaction D-glucose 6-phosphate = 1D-myo-inositol 3-phosphate. It functions in the pathway polyol metabolism; myo-inositol biosynthesis; myo-inositol from D-glucose 6-phosphate: step 1/2. Inhibited by 2-deoxyglucitol 6-phosphate (dgtolP) and 2-deoxy-D-glucose 6-phosphate. Inhibited by copper, mercury, cadmium, zinc and copper ions. Activated by potassium and ammonium ions. Its function is as follows. Key enzyme in myo-inositol biosynthesis pathway that catalyzes the conversion of glucose 6-phosphate to 1-myo-inositol 1-phosphate in a NAD-dependent manner. Rate-limiting enzyme in the synthesis of all inositol-containing compounds. In terms of biological role, key enzyme in myo-inositol biosynthesis pathway that catalyzes the conversion of glucose 6-phosphate to 1-myo-inositol 1-phosphate in a NAD-dependent manner. Competitively inhibits the function of isoform 1, presumably by competing for NAD cofactor. The polypeptide is Inositol-3-phosphate synthase 1 (Isyna1) (Rattus norvegicus (Rat)).